Consider the following 292-residue polypeptide: Histamine N-methyltransferase (292 aa).

Residue E28 participates in substrate binding. The S-adenosyl-L-methionine site is built by G60, E89, Q94, S120, and I142. N283 serves as a coordination point for substrate.

This sequence belongs to the class I-like SAM-binding methyltransferase superfamily. HNMT family. As to quaternary structure, monomer.

It is found in the cytoplasm. It carries out the reaction histamine + S-adenosyl-L-methionine = N(tau)-methylhistamine + S-adenosyl-L-homocysteine + H(+). Its function is as follows. Inactivates histamine by N-methylation. Plays an important role in degrading histamine and in regulating the airway response to histamine. This chain is Histamine N-methyltransferase (HNMT), found in Bos taurus (Bovine).